Consider the following 529-residue polypeptide: Inosine-5'-monophosphate dehydrogenase (529 aa).

CBS domains are found at residues 129–185 (MVTD…SKQV) and 189–246 (MTKA…PLAT). Residues Asp-283 and 334 to 336 (GVG) contribute to the NAD(+) site. Residues Gly-336 and Gly-338 each coordinate K(+). Residue Ser-339 coordinates IMP. Cys-341 provides a ligand contact to K(+). Cys-341 serves as the catalytic Thioimidate intermediate. IMP-binding positions include 374 to 376 (DGG), 397 to 398 (GS), and 421 to 425 (YRGMG). Arg-443 (proton acceptor) is an active-site residue. Glu-458 contacts IMP. Positions 511, 512, and 513 each coordinate K(+).

Belongs to the IMPDH/GMPR family. As to quaternary structure, homotetramer. Requires K(+) as cofactor.

The catalysed reaction is IMP + NAD(+) + H2O = XMP + NADH + H(+). It participates in purine metabolism; XMP biosynthesis via de novo pathway; XMP from IMP: step 1/1. Its activity is regulated as follows. Mycophenolic acid (MPA) is a non-competitive inhibitor that prevents formation of the closed enzyme conformation by binding to the same site as the amobile flap. In contrast, mizoribine monophosphate (MZP) is a competitive inhibitor that induces the closed conformation. MPA is a potent inhibitor of mammalian IMPDHs but a poor inhibitor of the bacterial enzymes. MZP is a more potent inhibitor of bacterial IMPDH. Its function is as follows. Catalyzes the conversion of inosine 5'-phosphate (IMP) to xanthosine 5'-phosphate (XMP), the first committed and rate-limiting step in the de novo synthesis of guanine nucleotides, and therefore plays an important role in the regulation of cell growth. The chain is Inosine-5'-monophosphate dehydrogenase from Mycobacterium bovis (strain ATCC BAA-935 / AF2122/97).